We begin with the raw amino-acid sequence, 133 residues long: UPF0225 protein BPP1723 (133 aa).

The protein belongs to the UPF0225 family.

In Bordetella parapertussis (strain 12822 / ATCC BAA-587 / NCTC 13253), this protein is UPF0225 protein BPP1723.